The primary structure comprises 286 residues: 33 kDa chaperonin (286 aa).

Cystine bridges form between cysteine 233/cysteine 235 and cysteine 267/cysteine 270.

It belongs to the HSP33 family. Post-translationally, under oxidizing conditions two disulfide bonds are formed involving the reactive cysteines. Under reducing conditions zinc is bound to the reactive cysteines and the protein is inactive.

It is found in the cytoplasm. Redox regulated molecular chaperone. Protects both thermally unfolding and oxidatively damaged proteins from irreversible aggregation. Plays an important role in the bacterial defense system toward oxidative stress. This is 33 kDa chaperonin from Histophilus somni (strain 129Pt) (Haemophilus somnus).